Reading from the N-terminus, the 530-residue chain is MSQLDTTTPSGDYLMALDAGTGSVRAVIFDLNGNQIAAGQAEWLHLPVPDVPGSMEFDLTTNWQLTCQCIRQALHLAKLPASAIRAVAACSMREGIVLYDRSGTPIWACANVDARASREVSELKELHNNGFELEVYQCSGQTLALSAMPRLLWLAHYRPDIYRQAGTLTMISDWLANMLSGELAVDPSNAGTTGMLDLVTRNWQPNLLEMAGLRADILSPVKETGTLLGHVTAKAAQECGLLAGTPVVMGGGDVQLGCLGLGVVHAGQTAVLGGTFWQQVVNLPQPIIDPNMNTRINPHVIPGMVQAESISFFTGLTMRWFRDAFCAEEKLLAQRLGIDTYSLLEDMAARVPAGAYGVMPIFSDVMRFKSWYHAAPSFINLSLDPEKCNKATLFRALEENAAIVSACNLAQIAEFSGVKASSVVFAGGGAKGKLWSQILADVTGVPVKVPVVKEATALGCAIAAGVGVGLYEALDKTGERLVRWEREYIPNTEHKALYQAAKTNWQAVYTDQLGLVDCGLTTSLWKAPCL.

This sequence belongs to the FGGY kinase family.

It is found in the cytoplasm. The catalysed reaction is (S)-4,5-dihydroxypentane-2,3-dione + ATP = (2S)-2-hydroxy-3,4-dioxopentyl phosphate + ADP + H(+). Its function is as follows. Catalyzes the phosphorylation of autoinducer-2 (AI-2) to phospho-AI-2, which subsequently inactivates the transcriptional regulator LsrR and leads to the transcription of the lsr operon. Phosphorylates the ring-open form of (S)-4,5-dihydroxypentane-2,3-dione (DPD), which is the precursor to all AI-2 signaling molecules, at the C5 position. The chain is Autoinducer-2 kinase from Yersinia pestis bv. Antiqua (strain Antiqua).